Consider the following 39-residue polypeptide: Gas vesicle protein C (39 aa).

This sequence belongs to the gas vesicle GvpC family.

Its subcellular location is the gas vesicle. Its function is as follows. Confers stability, involved in shaping gas vesicles, hollow, gas filled proteinaceous nanostructures. During planktonic growth they allow positioning of the organism at a favorable depth for light or nutrient acquisition. This is Gas vesicle protein C from Spirulina sp. (strain CCAP 1475/10).